The following is a 353-amino-acid chain: Protein-glutamate methylesterase/protein-glutamine glutaminase 4 (353 aa).

One can recognise a Response regulatory domain in the interval 7-124 (RILVAEDSPT…SPDFDADSRR (118 aa)). D58 is modified (4-aspartylphosphate). Residues 158-350 (PVSPTRPGVV…SRLTSAFRGS (193 aa)) enclose the CheB-type methylesterase domain. Residues S172, H199, and D292 contribute to the active site.

It belongs to the CheB family. Phosphorylated by CheA. Phosphorylation of the N-terminal regulatory domain activates the methylesterase activity.

The protein localises to the cytoplasm. It carries out the reaction [protein]-L-glutamate 5-O-methyl ester + H2O = L-glutamyl-[protein] + methanol + H(+). It catalyses the reaction L-glutaminyl-[protein] + H2O = L-glutamyl-[protein] + NH4(+). Its function is as follows. Involved in chemotaxis. Part of a chemotaxis signal transduction system that modulates chemotaxis in response to various stimuli. Catalyzes the demethylation of specific methylglutamate residues introduced into the chemoreceptors (methyl-accepting chemotaxis proteins or MCP) by CheR. Also mediates the irreversible deamidation of specific glutamine residues to glutamic acid. The chain is Protein-glutamate methylesterase/protein-glutamine glutaminase 4 from Myxococcus xanthus (strain DK1622).